Consider the following 70-residue polypeptide: ATP synthase subunit c (70 aa).

2 helical membrane passes run 4-24 (IAAA…NGLI) and 47-67 (FIGI…SFIV).

This sequence belongs to the ATPase C chain family. As to quaternary structure, F-type ATPases have 2 components, F(1) - the catalytic core - and F(0) - the membrane proton channel. F(1) has five subunits: alpha(3), beta(3), gamma(1), delta(1), epsilon(1). F(0) has three main subunits: a(1), b(2) and c(10-14). The alpha and beta chains form an alternating ring which encloses part of the gamma chain. F(1) is attached to F(0) by a central stalk formed by the gamma and epsilon chains, while a peripheral stalk is formed by the delta and b chains.

It localises to the cell membrane. F(1)F(0) ATP synthase produces ATP from ADP in the presence of a proton or sodium gradient. F-type ATPases consist of two structural domains, F(1) containing the extramembraneous catalytic core and F(0) containing the membrane proton channel, linked together by a central stalk and a peripheral stalk. During catalysis, ATP synthesis in the catalytic domain of F(1) is coupled via a rotary mechanism of the central stalk subunits to proton translocation. In terms of biological role, key component of the F(0) channel; it plays a direct role in translocation across the membrane. A homomeric c-ring of between 10-14 subunits forms the central stalk rotor element with the F(1) delta and epsilon subunits. The sequence is that of ATP synthase subunit c from Staphylococcus carnosus (strain TM300).